Consider the following 139-residue polypeptide: Probable DNA-binding protein (139 aa).

The tract at residues 97–139 is disordered; that stretch reads DEPSREASPDLGAAGAELEDESAQAGAVQGPETLRSQVLRART.

This Homo sapiens (Human) protein is Probable DNA-binding protein.